Reading from the N-terminus, the 280-residue chain is Undecaprenyl-diphosphatase (280 aa).

Helical transmembrane passes span 1–21 (MTIL…FLPV), 41–61 (FVRA…LVLY), 87–107 (FDLY…GFLF), 115–135 (LGSV…MLFV), 147–167 (ITYP…FLPG), 186–206 (KAAA…ATLL), 225–245 (IVLL…IKFF), and 260–280 (YRIL…SLAV).

It belongs to the UppP family.

Its subcellular location is the cell inner membrane. The catalysed reaction is di-trans,octa-cis-undecaprenyl diphosphate + H2O = di-trans,octa-cis-undecaprenyl phosphate + phosphate + H(+). Catalyzes the dephosphorylation of undecaprenyl diphosphate (UPP). Confers resistance to bacitracin. This is Undecaprenyl-diphosphatase from Porphyromonas gingivalis (strain ATCC 33277 / DSM 20709 / CIP 103683 / JCM 12257 / NCTC 11834 / 2561).